The chain runs to 319 residues: ATP-dependent 6-phosphofructokinase (319 aa).

ATP is bound at residue G11. 21 to 25 (RAVVR) contributes to the ADP binding site. Residues 72–73 (RC) and 102–105 (GDGS) contribute to the ATP site. D103 is a Mg(2+) binding site. 125 to 127 (TID) is a binding site for substrate. D127 acts as the Proton acceptor in catalysis. R154 provides a ligand contact to ADP. Residues R162 and 169–171 (MGR) contribute to the substrate site. ADP-binding positions include 185–187 (GAE), R211, and 213–215 (KKH). Substrate contacts are provided by residues E222, R243, and 249-252 (HIQR).

This sequence belongs to the phosphofructokinase type A (PFKA) family. ATP-dependent PFK group I subfamily. Prokaryotic clade 'B1' sub-subfamily. Homotetramer. Component of a possible RNA degradosome complex composed of rny, rnjA, rnjB, pnp, pfkA and eno (although rnjA and rnjB's presence is unclear). Specifically interacts with RNase Y (rny, PubMed:21803996) and enolase (eno, PubMed:22198292). Interacts with BrxC. Mg(2+) is required as a cofactor.

The protein localises to the cytoplasm. It carries out the reaction beta-D-fructose 6-phosphate + ATP = beta-D-fructose 1,6-bisphosphate + ADP + H(+). The protein operates within carbohydrate degradation; glycolysis; D-glyceraldehyde 3-phosphate and glycerone phosphate from D-glucose: step 3/4. With respect to regulation, allosterically activated by ADP and other diphosphonucleosides, and allosterically inhibited by phosphoenolpyruvate. Catalyzes the phosphorylation of D-fructose 6-phosphate to fructose 1,6-bisphosphate by ATP, the first committing step of glycolysis. The polypeptide is ATP-dependent 6-phosphofructokinase (Bacillus subtilis (strain 168)).